The chain runs to 444 residues: MTHSVPNIGFVSLGCPKNLVDSERILTELRSDGYNIIPTYENADLVIVNTCGFIDSAVQESLEAIGEALEANGKVLVTGCLGAKEDRIREVHPKVLEITGPHSYEAVMEHVHKYVPKPAYNPYINVVPSQGVKLTPKHYAYLKISEGCDHKCTFCIIPSLRGDLDSRPITQILDEAKRLADSGVKELLVVSQDTSAYSLDQSKETQNKTVFWNGIPIKNNLITLCQMLGTLGVWVRLHYVYPYPHVDDLIPLMAAGKILPYLDIPLQHASPKILKAMKRPGSVERVLERIKNWREICPELTLRSTFIVGFPGETEEDFQLLLDFLKEAQLDRVGCFKFSPVDGATATDMPDQVPEEVKEERFQRFMQLQQEISAARLQQKIGKTWKVIVDEIDEEGIIGRSMADAPEIDGVVYVDNVGQSAVRIGDIIDVRITRADEYDLWGTC.

Residues 6–116 (PNIGFVSLGC…VMEHVHKYVP (111 aa)) enclose the MTTase N-terminal domain. [4Fe-4S] cluster is bound by residues cysteine 15, cysteine 51, cysteine 80, cysteine 148, cysteine 152, and cysteine 155. The 242-residue stretch at 134-375 (LTPKHYAYLK…MQLQQEISAA (242 aa)) folds into the Radical SAM core domain. The region spanning 378–444 (QQKIGKTWKV…ADEYDLWGTC (67 aa)) is the TRAM domain.

It belongs to the methylthiotransferase family. RimO subfamily. Requires [4Fe-4S] cluster as cofactor.

It localises to the cytoplasm. The enzyme catalyses L-aspartate(89)-[ribosomal protein uS12]-hydrogen + (sulfur carrier)-SH + AH2 + 2 S-adenosyl-L-methionine = 3-methylsulfanyl-L-aspartate(89)-[ribosomal protein uS12]-hydrogen + (sulfur carrier)-H + 5'-deoxyadenosine + L-methionine + A + S-adenosyl-L-homocysteine + 2 H(+). Its function is as follows. Catalyzes the methylthiolation of an aspartic acid residue of ribosomal protein uS12. This chain is Ribosomal protein uS12 methylthiotransferase RimO, found in Actinobacillus succinogenes (strain ATCC 55618 / DSM 22257 / CCUG 43843 / 130Z).